The chain runs to 76 residues: Serine proteinase inhibitor IA-2 (76 aa).

The residue at position 1 (Ser-1) is an N-acetylserine.

Belongs to the protease inhibitor I9 family.

Functionally, specifically inhibits an intracellular serine proteinase (proteinase A). The sequence is that of Serine proteinase inhibitor IA-2 from Pleurotus ostreatus (Oyster mushroom).